The chain runs to 121 residues: UPF0344 protein BT9727_1053 (121 aa).

4 consecutive transmembrane segments (helical) span residues Ile6–Gly26, Leu38–Ala58, Trp65–Val85, and Ala92–Leu112.

Belongs to the UPF0344 family.

It localises to the cell membrane. The protein is UPF0344 protein BT9727_1053 of Bacillus thuringiensis subsp. konkukian (strain 97-27).